The primary structure comprises 419 residues: Hyaluronan synthase (419 aa).

Helical transmembrane passes span 8 to 28 (LIVL…MYLF), 33 to 53 (VGIY…LSFL), 318 to 338 (IVAL…VAIG), 345 to 365 (AIQL…IVAL), and 376 to 396 (PASF…LQPL).

Belongs to the NodC/HAS family. Mg(2+) is required as a cofactor.

The protein resides in the cell membrane. The catalysed reaction is [hyaluronan](n) + UDP-N-acetyl-alpha-D-glucosamine = N-acetyl-beta-D-glucosaminyl-(1-&gt;4)-[hyaluronan](n) + UDP + H(+). It carries out the reaction N-acetyl-beta-D-glucosaminyl-(1-&gt;4)-[hyaluronan](n) + UDP-alpha-D-glucuronate = [hyaluronan](n+1) + UDP + H(+). It participates in glycan biosynthesis; hyaluronan biosynthesis. Functionally, glycosaminoglycan synthesis. The hyaluronic acid capsule is involved in the pathogenicity of group A Streptococci; it may be the major virulence determinant. The protein is Hyaluronan synthase (hasA) of Streptococcus pyogenes serotype M18 (strain MGAS8232).